We begin with the raw amino-acid sequence, 454 residues long: MSKKTRVPEVADDCTKTVYPDPIPMPTCPQLINDGTSCFLNIILQMLKRANFHDHFKGDWQKGKQKMLMHKELQQIFNGKPGPKDVSRLREMFSNEALKDGPHPLLVALKCLIKMSAVSDNDVIKEKGARDKMFQKQSDESNKMFAEHFIKTLLACKGMTKIRTMDIFRLIHICKKIFTVQKSMVEIDGPVRICGDLHGQYPDLIRLFAQGGFPPDSNYLFLGDYVDRGSFNLEVILLCLAYKARYPNNFMMLRGNHEVIHINEKYGFKDEVFNRKGEYHDELYPEFNEMMDMMPLVALVGGRILCMHGGLSQHIKSLDDLRNLRRPFHSEDECLENDIMWSDPAKVSGWTANPRGASVQFGENEVKEMCKLLDIDLIVRGHQVVQDGYEFFAGKKLVTVFSAPHYMQSFTNSAAVCKVSAGLEVSFEVLKPEDIRVEEIKCSAESSCASDMQQ.

Asp-196, His-198, Asp-224, and Asn-256 together coordinate Mn(2+). His-257 functions as the Proton donor in the catalytic mechanism. His-308 and His-382 together coordinate Mn(2+).

The protein belongs to the PPP phosphatase family. PP-1 subfamily. The cofactor is Mn(2+).

The enzyme catalyses O-phospho-L-seryl-[protein] + H2O = L-seryl-[protein] + phosphate. The catalysed reaction is O-phospho-L-threonyl-[protein] + H2O = L-threonyl-[protein] + phosphate. In Caenorhabditis elegans, this protein is Serine/threonine-protein phosphatase C23G10.1.